Reading from the N-terminus, the 344-residue chain is L-rhamnose-proton symporter (344 aa).

10 helical membrane-spanning segments follow: residues 4 to 24 (PILL…CFYA), 38 to 58 (WSLG…WWLL), 68 to 88 (FDMA…IGNI), 101 to 121 (MGIG…TPVL), 137 to 157 (TLLG…AGLL), 175 to 195 (LILA…MDAA), 207 to 227 (INAL…GAVV), 255 to 275 (LIAN…QFFF), 290 to 310 (ISWM…GLLF), and 324 to 344 (LVLG…GMAA).

It belongs to the L-rhamnose transporter (TC 2.A.7.6) family.

Its subcellular location is the cell inner membrane. The catalysed reaction is L-rhamnopyranose(in) + H(+)(in) = L-rhamnopyranose(out) + H(+)(out). Its function is as follows. Uptake of L-rhamnose across the cytoplasmic membrane with the concomitant transport of protons into the cell (symport system). The chain is L-rhamnose-proton symporter from Pectobacterium carotovorum subsp. carotovorum (strain PC1).